The primary structure comprises 185 residues: Calcium-binding protein CML37 (185 aa).

Residues 1 to 12 (MTLAKNQKSSLS) are compositionally biased toward polar residues. Residues 1 to 45 (MTLAKNQKSSLSRLYKKVSSKRSESSRNLEDESRTSSNSSGSSSL) form a disordered region. Residues 21–34 (KRSESSRNLEDESR) are compositionally biased toward basic and acidic residues. Residues 35–44 (TSSNSSGSSS) are compositionally biased toward low complexity. 4 consecutive EF-hand domains span residues 45–80 (LNVN…LGGA), 81–116 (LSSR…EDGS), 119–154 (ERRK…LGES), and 155–185 (CTVD…LMMR). The Ca(2+) site is built by Asp58, Asn60, Asp62, Lys64, Glu69, Asp94, Asp96, Asp98, and Glu105. Residues Asp168, Asn170, Asp172, and Glu179 each contribute to the Ca(2+) site.

In terms of assembly, binds to ABCG36. Expressed in cotyledons, stipule, young leaves and at the hypocotyl-root junction. In mature root, expressed in the stele, cortex, emerging lateral root, root tip and root cap. In mature plant, expressed at the base of cauline and floral branches, and in rosette and cauline leaves. Expressed from stage 9 to 14 of flower development in anthers. At stage 15, expressed in carpel, sepals, petals and pollen until dehiscence. Expressed in developing seeds and young siliques.

In terms of biological role, potential calcium sensor that binds calcium in vitro. The sequence is that of Calcium-binding protein CML37 from Arabidopsis thaliana (Mouse-ear cress).